We begin with the raw amino-acid sequence, 452 residues long: Bifunctional protein GlmU (452 aa).

The segment at 1–226 is pyrophosphorylase; sequence MSLTTVILAA…PMEVEGANNR (226 aa). UDP-N-acetyl-alpha-D-glucosamine is bound by residues 8–11, Lys-22, Gln-73, 78–79, 100–102, Gly-137, Glu-151, Asn-166, and Asn-224; these read LAAG, GT, and YGD. Residue Asp-102 coordinates Mg(2+). Residue Asn-224 participates in Mg(2+) binding. The linker stretch occupies residues 227–247; sequence IQLAGLERAYQAWQAQELMLN. An N-acetyltransferase region spans residues 248-452; sequence GATLADPARI…LDGWKRPVKK (205 aa). Residues Arg-330 and Lys-348 each contribute to the UDP-N-acetyl-alpha-D-glucosamine site. The Proton acceptor role is filled by His-360. Residues Tyr-363 and Asn-374 each coordinate UDP-N-acetyl-alpha-D-glucosamine. Acetyl-CoA contacts are provided by residues Ala-377, 383–384, Ser-402, Ala-420, and Arg-437; that span reads NY.

In the N-terminal section; belongs to the N-acetylglucosamine-1-phosphate uridyltransferase family. The protein in the C-terminal section; belongs to the transferase hexapeptide repeat family. As to quaternary structure, homotrimer. The cofactor is Mg(2+).

Its subcellular location is the cytoplasm. It carries out the reaction alpha-D-glucosamine 1-phosphate + acetyl-CoA = N-acetyl-alpha-D-glucosamine 1-phosphate + CoA + H(+). The catalysed reaction is N-acetyl-alpha-D-glucosamine 1-phosphate + UTP + H(+) = UDP-N-acetyl-alpha-D-glucosamine + diphosphate. It functions in the pathway nucleotide-sugar biosynthesis; UDP-N-acetyl-alpha-D-glucosamine biosynthesis; N-acetyl-alpha-D-glucosamine 1-phosphate from alpha-D-glucosamine 6-phosphate (route II): step 2/2. It participates in nucleotide-sugar biosynthesis; UDP-N-acetyl-alpha-D-glucosamine biosynthesis; UDP-N-acetyl-alpha-D-glucosamine from N-acetyl-alpha-D-glucosamine 1-phosphate: step 1/1. The protein operates within bacterial outer membrane biogenesis; LPS lipid A biosynthesis. Its function is as follows. Catalyzes the last two sequential reactions in the de novo biosynthetic pathway for UDP-N-acetylglucosamine (UDP-GlcNAc). The C-terminal domain catalyzes the transfer of acetyl group from acetyl coenzyme A to glucosamine-1-phosphate (GlcN-1-P) to produce N-acetylglucosamine-1-phosphate (GlcNAc-1-P), which is converted into UDP-GlcNAc by the transfer of uridine 5-monophosphate (from uridine 5-triphosphate), a reaction catalyzed by the N-terminal domain. The protein is Bifunctional protein GlmU of Pseudoalteromonas translucida (strain TAC 125).